We begin with the raw amino-acid sequence, 577 residues long: Monooxygenase PC-14 (577 aa).

This sequence belongs to the FMO family. FAD serves as cofactor.

It functions in the pathway secondary metabolite biosynthesis. Functionally, monooxygenase; part of the gene cluster that mediates the biosynthesis of the indole diterpenes penitrems. The geranylgeranyl diphosphate (GGPP) synthase penG catalyzes the first step in penitrem biosynthesis via conversion of farnesyl pyrophosphate and isopentyl pyrophosphate into geranylgeranyl pyrophosphate (GGPP). Condensation of indole-3-glycerol phosphate with GGPP by the prenyl transferase penC then forms 3-geranylgeranylindole (3-GGI). Epoxidation by the FAD-dependent monooxygenase penM leads to a epoxidized-GGI that is substrate of the terpene cyclase penB for cyclization to yield paspaline. Paspaline is subsequently converted to 13-desoxypaxilline by the cytochrome P450 monooxygenase penP, the latter being then converted to paxilline by the cytochrome P450 monooxygenase penQ. Paxilline is converted to beta-paxitriol via C-10 ketoreduction by the short-chain dehydrogenase PC-15 which can be monoprenylated at the C-20 by the indole diterpene prenyltransferase penD. A two-step elimination (acetylation and elimination) process performed by the O-acetyltransferase PC-16 and the P.simplicissimum ptmI-ortholog not yet identified in P.crustosum, leads to the production of the prenylated form of penijanthine. The FAD-linked oxidoreductase ptmO then converts the prenylated form of penijanthine into PC-M5 which is in turn transformed into PC-M4 by the aromatic dimethylallyltransferase PC-22. A series of oxidation steps involving 4 cytochrome P450 monooxygenases (PC-21, PC-05, PC-23, PC-20) and a FAD-dependent monooxygenase (PC-14) are required for the transformation of PC-M4 to penitrems A and E. Synthesis of these final products is proposed to proceed via penitrems D and C (PC-21, PC-05, PC-14) and penitrems B and F (PC-21, PC-05, PC-14, PC-23). This is Monooxygenase PC-14 from Penicillium crustosum (Blue mold fungus).